The sequence spans 308 residues: Ornithine carbamoyltransferase (308 aa).

Residues 56–59, Gln83, Arg107, and 134–137 contribute to the carbamoyl phosphate site; these read STRT and HPCQ. Residues Asn165, Asp225, and 229–230 contribute to the L-ornithine site; that span reads SM. Carbamoyl phosphate is bound by residues 266–267 and Arg294; that span reads CL.

This sequence belongs to the aspartate/ornithine carbamoyltransferase superfamily. OTCase family.

It localises to the cytoplasm. It carries out the reaction carbamoyl phosphate + L-ornithine = L-citrulline + phosphate + H(+). The protein operates within amino-acid degradation; L-arginine degradation via ADI pathway; carbamoyl phosphate from L-arginine: step 2/2. Functionally, reversibly catalyzes the transfer of the carbamoyl group from carbamoyl phosphate (CP) to the N(epsilon) atom of ornithine (ORN) to produce L-citrulline. This Cereibacter sphaeroides (strain KD131 / KCTC 12085) (Rhodobacter sphaeroides) protein is Ornithine carbamoyltransferase.